A 120-amino-acid polypeptide reads, in one-letter code: Glycine cleavage system H protein (120 aa).

The Lipoyl-binding domain maps to 17–99 (VATVGITAHA…QGDGWLYRLK (83 aa)). Lys58 is subject to N6-lipoyllysine.

It belongs to the GcvH family. In terms of assembly, the glycine cleavage system is composed of four proteins: P, T, L and H. It depends on (R)-lipoate as a cofactor.

Its function is as follows. The glycine cleavage system catalyzes the degradation of glycine. The H protein shuttles the methylamine group of glycine from the P protein to the T protein. The sequence is that of Glycine cleavage system H protein from Methylorubrum extorquens (strain PA1) (Methylobacterium extorquens).